A 326-amino-acid polypeptide reads, in one-letter code: Transmembrane protein 255B (326 aa).

4 helical membrane-spanning segments follow: residues 26–46 (LWFVGSLLLVSVLIVTVGLAA), 55–75 (VGGYYPGIILGFGSFLGIIGI), 85–105 (LVAAIVFISFGVVAAFCCAIV), and 200–220 (AVLNVLGLFLGIITAAVLGAF). Residues 284 to 326 (LASSEDLQPPSPSSSGSGLPGQAPPCYAPTYFPPGEKPPPYAP) form a disordered region. Residues 305–326 (QAPPCYAPTYFPPGEKPPPYAP) are compositionally biased toward pro residues.

Belongs to the TMEM255 family.

It is found in the membrane. This is Transmembrane protein 255B (TMEM255B) from Homo sapiens (Human).